The following is a 306-amino-acid chain: CRISPR-associated endonuclease Cas1 (306 aa).

Positions 143, 210, and 223 each coordinate Mn(2+).

Belongs to the CRISPR-associated endonuclease Cas1 family. In terms of assembly, homodimer, forms a heterotetramer with a Cas2 homodimer. The cofactor is Mg(2+). Mn(2+) serves as cofactor.

Its function is as follows. CRISPR (clustered regularly interspaced short palindromic repeat), is an adaptive immune system that provides protection against mobile genetic elements (viruses, transposable elements and conjugative plasmids). CRISPR clusters contain spacers, sequences complementary to antecedent mobile elements, and target invading nucleic acids. CRISPR clusters are transcribed and processed into CRISPR RNA (crRNA). Acts as a dsDNA endonuclease. Involved in the integration of spacer DNA into the CRISPR cassette. This chain is CRISPR-associated endonuclease Cas1, found in Geobacter sulfurreducens (strain ATCC 51573 / DSM 12127 / PCA).